The chain runs to 154 residues: Putative lipoprotein MAB_4074c (154 aa).

The signal sequence occupies residues 1-21 (MMNRVIVGAMGLLAAGAVVVG). Residue C22 is the site of N-palmitoyl cysteine attachment. C22 is lipidated: S-diacylglycerol cysteine.

It belongs to the mycobacterial 19 kDa antigen family.

It is found in the cell membrane. This is Putative lipoprotein MAB_4074c from Mycobacteroides abscessus (strain ATCC 19977 / DSM 44196 / CCUG 20993 / CIP 104536 / JCM 13569 / NCTC 13031 / TMC 1543 / L948) (Mycobacterium abscessus).